The primary structure comprises 493 residues: Glutamyl-tRNA(Gln) amidotransferase subunit A (493 aa).

Residues K78 and S158 each act as charge relay system in the active site. The active-site Acyl-ester intermediate is the S182.

The protein belongs to the amidase family. GatA subfamily. In terms of assembly, heterotrimer of A, B and C subunits.

It catalyses the reaction L-glutamyl-tRNA(Gln) + L-glutamine + ATP + H2O = L-glutaminyl-tRNA(Gln) + L-glutamate + ADP + phosphate + H(+). Allows the formation of correctly charged Gln-tRNA(Gln) through the transamidation of misacylated Glu-tRNA(Gln) in organisms which lack glutaminyl-tRNA synthetase. The reaction takes place in the presence of glutamine and ATP through an activated gamma-phospho-Glu-tRNA(Gln). The polypeptide is Glutamyl-tRNA(Gln) amidotransferase subunit A (Azorhizobium caulinodans (strain ATCC 43989 / DSM 5975 / JCM 20966 / LMG 6465 / NBRC 14845 / NCIMB 13405 / ORS 571)).